The sequence spans 875 residues: E3 SUMO-protein ligase SIZ1 (875 aa).

One can recognise an SAP domain in the interval 12-46 (LAYFRIKELKDILNQLGLPKQGKKQDLIDRVLALL). The segment at 114-169 (KVRCICSSTMVNDSMIQCEDQRCQVWQHLNCVLIPDKPGESAEVPPVFYCELCRLS) adopts a PHD-type zinc-finger fold. An SP-RING-type zinc finger spans residues 349-430 (SDLEVVAESV…FNRITSLLRN (82 aa)). Zn(2+) contacts are provided by Cys-380, His-382, Cys-403, and Cys-406. Residues 796–820 (GGGGNEEPAPADVNSQPQIPSTETG) are disordered. Residues 808–819 (VNSQPQIPSTET) show a composition bias toward polar residues.

Belongs to the PIAS family.

The protein localises to the nucleus. It functions in the pathway protein modification; protein sumoylation. Probable SUMO E3 ligase that may regulate Pi starvation responses. The sequence is that of E3 SUMO-protein ligase SIZ1 (SIZ1) from Oryza sativa subsp. japonica (Rice).